The chain runs to 459 residues: Alcohol acyl transferase 2 (459 aa).

Residues His-164 and Asn-385 each act as proton acceptor in the active site.

It belongs to the plant acyltransferase family. Highly expressed in the cortex and skin of ripe fruit.

In terms of biological role, involved in the biosynthesis of volatile esters which confer ripe apple fruit flavor. Alcohol acyl transferase that can use a wide range of alcohols as substrate to produce esters. In Malus domestica (Apple), this protein is Alcohol acyl transferase 2.